A 1390-amino-acid polypeptide reads, in one-letter code: DNA-directed RNA polymerase subunit beta'' (1390 aa).

Cys-224, Cys-295, Cys-302, and Cys-305 together coordinate Zn(2+).

This sequence belongs to the RNA polymerase beta' chain family. RpoC2 subfamily. In terms of assembly, in plastids the minimal PEP RNA polymerase catalytic core is composed of four subunits: alpha, beta, beta', and beta''. When a (nuclear-encoded) sigma factor is associated with the core the holoenzyme is formed, which can initiate transcription. Requires Zn(2+) as cofactor.

The protein resides in the plastid. It is found in the chloroplast. The catalysed reaction is RNA(n) + a ribonucleoside 5'-triphosphate = RNA(n+1) + diphosphate. Its function is as follows. DNA-dependent RNA polymerase catalyzes the transcription of DNA into RNA using the four ribonucleoside triphosphates as substrates. This Daucus carota (Wild carrot) protein is DNA-directed RNA polymerase subunit beta''.